We begin with the raw amino-acid sequence, 450 residues long: Exodeoxyribonuclease 7 large subunit (450 aa).

The protein belongs to the XseA family. In terms of assembly, heterooligomer composed of large and small subunits.

It is found in the cytoplasm. It catalyses the reaction Exonucleolytic cleavage in either 5'- to 3'- or 3'- to 5'-direction to yield nucleoside 5'-phosphates.. Bidirectionally degrades single-stranded DNA into large acid-insoluble oligonucleotides, which are then degraded further into small acid-soluble oligonucleotides. The protein is Exodeoxyribonuclease 7 large subunit of Listeria monocytogenes serotype 4b (strain CLIP80459).